We begin with the raw amino-acid sequence, 177 residues long: Small ribosomal subunit protein bS21m (177 aa).

Residues Met-1–Phe-17 constitute a mitochondrion transit peptide.

It belongs to the bacterial ribosomal protein bS21 family. In terms of assembly, component of the mitochondrial small ribosomal subunit (mt-SSU). Mature yeast 74S mitochondrial ribosomes consist of a small (37S) and a large (54S) subunit. The 37S small subunit contains a 15S ribosomal RNA (15S mt-rRNA) and 34 different proteins. The 54S large subunit contains a 21S rRNA (21S mt-rRNA) and 46 different proteins.

Its subcellular location is the mitochondrion. Functionally, component of the mitochondrial ribosome (mitoribosome), a dedicated translation machinery responsible for the synthesis of mitochondrial genome-encoded proteins, including at least some of the essential transmembrane subunits of the mitochondrial respiratory chain. The mitoribosomes are attached to the mitochondrial inner membrane and translation products are cotranslationally integrated into the membrane. In Saccharomyces cerevisiae (strain ATCC 204508 / S288c) (Baker's yeast), this protein is Small ribosomal subunit protein bS21m (MRP21).